The primary structure comprises 294 residues: ATP phosphoribosyltransferase (294 aa).

This sequence belongs to the ATP phosphoribosyltransferase family. Long subfamily. The cofactor is Mg(2+).

The protein resides in the cytoplasm. The enzyme catalyses 1-(5-phospho-beta-D-ribosyl)-ATP + diphosphate = 5-phospho-alpha-D-ribose 1-diphosphate + ATP. The protein operates within amino-acid biosynthesis; L-histidine biosynthesis; L-histidine from 5-phospho-alpha-D-ribose 1-diphosphate: step 1/9. Its activity is regulated as follows. Feedback inhibited by histidine. Catalyzes the condensation of ATP and 5-phosphoribose 1-diphosphate to form N'-(5'-phosphoribosyl)-ATP (PR-ATP). Has a crucial role in the pathway because the rate of histidine biosynthesis seems to be controlled primarily by regulation of HisG enzymatic activity. This is ATP phosphoribosyltransferase from Chlorobaculum parvum (strain DSM 263 / NCIMB 8327) (Chlorobium vibrioforme subsp. thiosulfatophilum).